Here is a 173-residue protein sequence, read N- to C-terminus: Alpha-crystallin A chain (173 aa).

Met1 bears the N-acetylmethionine mark. Positions 1 to 63 (MDVTIQHPWF…RTVLDSGISE (63 aa)) are required for complex formation with BFSP1 and BFSP2; during homooligomerization, mediates the association of 2 dimers to form a tetramer. Residue Gln6 is modified to Deamidated glutamine; partial. Ser45 is subject to Phosphoserine. Deamidated glutamine; partial is present on Gln50. Residues 52–164 (LFRTVLDSGI…AERAIPVSRE (113 aa)) enclose the sHSP domain. An N6-acetyllysine modification is found at Lys70. Gln90 carries the post-translational modification Deamidated glutamine; partial. Lys99 carries the N6-acetyllysine modification. His100 is a binding site for Zn(2+). Asn101 is modified (deamidated asparagine; partial). Residues Glu102 and His107 each coordinate Zn(2+). Ser122 carries the post-translational modification Phosphoserine. A Deamidated asparagine; partial modification is found at Asn123. A disulfide bridge connects residues Cys131 and Cys142. A Deamidated glutamine; partial modification is found at Gln147. Position 154 (His154) interacts with Zn(2+). Ser162 is a glycosylation site (O-linked (GlcNAc) serine).

Belongs to the small heat shock protein (HSP20) family. Heteropolymer composed of three CRYAA and one CRYAB subunits. Inter-subunit bridging via zinc ions enhances stability, which is crucial as there is no protein turn over in the lens. Can also form homodimers and homotetramers (dimers of dimers) which serve as the building blocks of homooligomers. Within homooligomers, the zinc-binding motif is created from residues of 3 different molecules. His-100 and Glu-102 from one molecule are ligands of the zinc ion, and His-107 and His-154 residues from additional molecules complete the site with tetrahedral coordination geometry. Part of a complex required for lens intermediate filament formation composed of BFSP1, BFSP2 and CRYAA. In terms of processing, O-glycosylated; contains N-acetylglucosamine side chains. Deamidation of Asn-101 in lens occurs mostly during the first 30 years of age, followed by a small additional amount of deamidation (approximately 5%) during the next approximately 38 years, resulting in a maximum of approximately 50% deamidation during the lifetime of the individual. Post-translationally, phosphorylation on Ser-122 seems to be developmentally regulated. Absent in the first months of life, it appears during the first 12 years of human lifetime. The relative amount of phosphorylated form versus unphosphorylated form does not change over the lifetime of the individual. In terms of processing, acetylation at Lys-70 may increase chaperone activity. Undergoes age-dependent proteolytical cleavage at the C-terminus. Alpha-crystallin A(1-172) is the most predominant form produced most rapidly during the first 12 years of age and after this age is present in approximately 50% of the lens molecules. Post-translationally, in young individuals and during the first approximately 30 years of life, less than half molecules contain an intramolecular disulfide bond (oxidized form), while in the remaining fraction the cysteines are in the free sulfhydryl form (reduced form). With aging, the amount of oxidized form increases up to 90% and it becomes a major constituent of high molecular weight aggregates, concomitant with an age-dependent loss of its chaperone activity. The reduced form is undetectable in cataractous lenses. As to expression, expressed in the eye lens (at protein level).

The protein localises to the cytoplasm. It is found in the nucleus. In terms of biological role, contributes to the transparency and refractive index of the lens. In its oxidized form (absence of intramolecular disulfide bond), acts as a chaperone, preventing aggregation of various proteins under a wide range of stress conditions. Required for the correct formation of lens intermediate filaments as part of a complex composed of BFSP1, BFSP2 and CRYAA. This is Alpha-crystallin A chain (CRYAA) from Homo sapiens (Human).